Consider the following 509-residue polypeptide: 2,3-bisphosphoglycerate-independent phosphoglycerate mutase (509 aa).

Mn(2+)-binding residues include aspartate 14 and serine 64. Serine 64 (phosphoserine intermediate) is an active-site residue. Substrate-binding positions include histidine 125, 155–156, arginine 187, arginine 193, 259–262, and lysine 332; these read RD and RADR. Residues aspartate 399, histidine 403, aspartate 440, histidine 441, and histidine 459 each coordinate Mn(2+).

This sequence belongs to the BPG-independent phosphoglycerate mutase family. As to quaternary structure, monomer. The cofactor is Mn(2+).

It carries out the reaction (2R)-2-phosphoglycerate = (2R)-3-phosphoglycerate. Its pathway is carbohydrate degradation; glycolysis; pyruvate from D-glyceraldehyde 3-phosphate: step 3/5. Functionally, catalyzes the interconversion of 2-phosphoglycerate and 3-phosphoglycerate. The chain is 2,3-bisphosphoglycerate-independent phosphoglycerate mutase from Aeromonas salmonicida (strain A449).